The following is a 141-amino-acid chain: Hemoglobin subunit alpha (141 aa).

One can recognise a Globin domain in the interval 1–141 (VLSPADKTNV…VSTVLTSKYR (141 aa)). At Ser3 the chain carries Phosphoserine. Lys7 carries the post-translational modification N6-succinyllysine. Thr8 is subject to Phosphothreonine. Lys11 is modified (N6-succinyllysine). Lys16 bears the N6-acetyllysine; alternate mark. Residue Lys16 is modified to N6-succinyllysine; alternate. Tyr24 carries the phosphotyrosine modification. Ser35 carries the phosphoserine modification. Lys40 carries the N6-succinyllysine modification. Ser49 is modified (phosphoserine). O2 is bound at residue His58. His87 contributes to the heme b binding site. Ser102 bears the Phosphoserine mark. A Phosphothreonine modification is found at Thr108. At Ser124 the chain carries Phosphoserine. 2 positions are modified to phosphothreonine: Thr134 and Thr137. Ser138 bears the Phosphoserine mark.

This sequence belongs to the globin family. Heterotetramer of two alpha chains and two beta chains. Red blood cells.

Its function is as follows. Involved in oxygen transport from the lung to the various peripheral tissues. In terms of biological role, hemopressin acts as an antagonist peptide of the cannabinoid receptor CNR1. Hemopressin-binding efficiently blocks cannabinoid receptor CNR1 and subsequent signaling. This chain is Hemoglobin subunit alpha (HBA), found in Odobenus rosmarus divergens (Pacific walrus).